Reading from the N-terminus, the 414-residue chain is 2,3-diketo-5-methylthiopentyl-1-phosphate enolase (414 aa).

Residue K99 is the Proton acceptor of the active site. Substrate is bound by residues K148, 174–177 (KDDE), H265, G338, and 360–361 (GG). Positions 174, 176, and 177 each coordinate Mg(2+). At K174 the chain carries N6-carboxylysine.

Belongs to the RuBisCO large chain family. Type IV subfamily. Homodimer. The cofactor is Mg(2+).

The enzyme catalyses 5-methylsulfanyl-2,3-dioxopentyl phosphate = 2-hydroxy-5-methylsulfanyl-3-oxopent-1-enyl phosphate. It participates in amino-acid biosynthesis; L-methionine biosynthesis via salvage pathway; L-methionine from S-methyl-5-thio-alpha-D-ribose 1-phosphate: step 3/6. In terms of biological role, catalyzes the enolization of 2,3-diketo-5-methylthiopentyl-1-phosphate (DK-MTP-1-P) into 2-hydroxy-3-keto-5-methylthiopentenyl-1-phosphate (HK-MTPenyl-1-P). This Bacillus cereus (strain AH820) protein is 2,3-diketo-5-methylthiopentyl-1-phosphate enolase.